The sequence spans 540 residues: Sterol O-acyltransferase 1 (540 aa).

The tract at residues 1–20 (MSLRNRLSKSGENPEQDEAQ) is disordered. Topologically, residues 1–128 (MSLRNRLSKS…LDELFEVDHI (128 aa)) are cytoplasmic. At Ser-2 the chain carries Phosphoserine. Residue His-127 participates in cholesterol binding. The chain crosses the membrane as a helical span at residues 129 to 150 (RTIYHMFIALLILFVLSTIVVD). At 151–170 (YIDEGRLVLEFNLLAYAFGK) the chain is on the lumenal side. A helical membrane pass occupies residues 171–196 (FPTVIWTWWAMFLSTLSIPYFLFQRW). Over 197 to 208 (AHGYSKSSHPLI) the chain is Cytoplasmic. Residues 209–234 (YSLVHGLLFLVFQLGVLGFVPTYVVL) form a helical membrane-spanning segment. Residues 235–242 (AYTLPPAS) lie on the Lumenal side of the membrane. The chain crosses the membrane as a helical span at residues 243–266 (RFILILEQIRLIMKAHSFVRENIP). Topologically, residues 267–309 (RVLNAAKEKSSKDPLPTVNQYLYFLFAPTLIYRDNYPRTPTVR) are cytoplasmic. A helical transmembrane segment spans residues 310–342 (WGYVAMQFLQVFGCLFYVYYIFERLCAPLFRNI). At 343–359 (KQEPFSARVLVLCVFNS) the chain is on the lumenal side. A helical transmembrane segment spans residues 360 to 385 (ILPGVLILFLSFFAFLHCWLNAFAEM). Residues 386 to 433 (LRFGDRMFYKDWWNSTSYSNYYRTWNVVVHDWLYYYVYKDLLWFFSKR) are Cytoplasmic-facing. Positions 393–399 (FYKDWWN) match the FYXDWWN motif motif. Positions 405, 408, 411, 415, 423, 435, and 446 each coordinate an acyl-CoA. A helical transmembrane segment spans residues 434 to 458 (FKSAAMLAVFALSAVVHEYALAICL). Residue His-450 is part of the active site. Topologically, residues 459 to 464 (SYFYPV) are lumenal. The helical transmembrane segment at 465 to 480 (LFVLFMFFGMAFNFIV) threads the bilayer. Topologically, residues 481–486 (NDSRKR) are cytoplasmic. A helical membrane pass occupies residues 487 to 518 (PIWNIMVWASLFLGYGLILCFYSQEWYARQHC). A disulfide bond links Cys-518 and Cys-536. The Lumenal segment spans residues 519 to 540 (PLKNPTFLDYVRPRTWTCRYVF).

It belongs to the membrane-bound acyltransferase family. Sterol o-acyltransferase subfamily. May form homo- or heterodimers. Interacts with UBIAD1.

The protein resides in the endoplasmic reticulum membrane. The enzyme catalyses a sterol + a long-chain fatty acyl-CoA = a long-chain 3-hydroxysterol ester + CoA. It catalyses the reaction cholesterol + an acyl-CoA = a cholesterol ester + CoA. The catalysed reaction is cholesterol + (9Z)-octadecenoyl-CoA = cholesteryl (9Z-octadecenoate) + CoA. It carries out the reaction cholesterol + hexadecanoyl-CoA = cholesteryl hexadecanoate + CoA. The enzyme catalyses octadecanoyl-CoA + cholesterol = cholesteryl octadecanoate + CoA. It catalyses the reaction (9Z,12Z)-octadecadienoyl-CoA + cholesterol = cholesteryl (9Z,12Z)-octadecadienoate + CoA. The catalysed reaction is (5Z,8Z,11Z,14Z)-eicosatetraenoyl-CoA + cholesterol = cholesteryl (5Z,8Z,11Z,14Z)-eicosatetraenoate + CoA. It carries out the reaction (9Z)-hexadecenoyl-CoA + cholesterol = cholesteryl (9Z)-hexadecenoate + CoA. The enzyme catalyses (11Z)-octadecenoyl-CoA + cholesterol = cholesteryl (11Z)-octadecenoate + CoA. It catalyses the reaction (7Z)-octadecenoyl-CoA + cholesterol = cholesteryl (7Z)-octadecenoate + CoA. In terms of biological role, catalyzes the formation of fatty acid-cholesterol esters, which are less soluble in membranes than cholesterol. Plays a role in lipoprotein assembly and dietary cholesterol absorption. Preferentially utilizes oleoyl-CoA ((9Z)-octadecenoyl-CoA) as a substrate: shows a higher activity towards an acyl-CoA substrate with a double bond at the delta-9 position (9Z) than towards saturated acyl-CoA or an unsaturated acyl-CoA with a double bond at the delta-7 (7Z) or delta-11 (11Z) positions. This is Sterol O-acyltransferase 1 from Mus musculus (Mouse).